The sequence spans 398 residues: Phosphoglycerate kinase (398 aa).

Residues 21-23, Arg36, 59-62, Arg119, and Arg157 each bind substrate; these read DFN and HLGR. Residues Lys208, Gly296, Glu327, and 354 to 357 contribute to the ATP site; that span reads GGDS.

This sequence belongs to the phosphoglycerate kinase family. As to quaternary structure, monomer.

It is found in the cytoplasm. It catalyses the reaction (2R)-3-phosphoglycerate + ATP = (2R)-3-phospho-glyceroyl phosphate + ADP. It participates in carbohydrate degradation; glycolysis; pyruvate from D-glyceraldehyde 3-phosphate: step 2/5. The chain is Phosphoglycerate kinase from Streptococcus pyogenes serotype M18 (strain MGAS8232).